The sequence spans 88 residues: UPF0237 protein SMU_72 (88 aa).

The ACT domain maps to 4-77 (IITVVGKDRT…ETLNVKINIQ (74 aa)).

The protein belongs to the UPF0237 family. In terms of assembly, homodimer.

This chain is UPF0237 protein SMU_72, found in Streptococcus mutans serotype c (strain ATCC 700610 / UA159).